A 340-amino-acid chain; its full sequence is Outer membrane protein B (340 aa).

A signal peptide spans 1 to 26 (MSSKLVNYLRLTFLSFLGIASTSLDA).

Belongs to the chlamydial OMP family.

Its subcellular location is the cell outer membrane. In Chlamydia trachomatis serovar D (strain ATCC VR-885 / DSM 19411 / UW-3/Cx), this protein is Outer membrane protein B (ompB).